Consider the following 444-residue polypeptide: UDP-N-acetylmuramate--L-alanine ligase (444 aa).

111 to 117 (GAHGKTS) serves as a coordination point for ATP.

This sequence belongs to the MurCDEF family.

The protein localises to the cytoplasm. It catalyses the reaction UDP-N-acetyl-alpha-D-muramate + L-alanine + ATP = UDP-N-acetyl-alpha-D-muramoyl-L-alanine + ADP + phosphate + H(+). Its pathway is cell wall biogenesis; peptidoglycan biosynthesis. Cell wall formation. This is UDP-N-acetylmuramate--L-alanine ligase from Leuconostoc citreum (strain KM20).